Consider the following 307-residue polypeptide: Glutaminase 1 (307 aa).

7 residues coordinate substrate: S62, N114, E159, N166, Y190, Y242, and V260.

It belongs to the glutaminase family. As to quaternary structure, homotetramer.

The enzyme catalyses L-glutamine + H2O = L-glutamate + NH4(+). The polypeptide is Glutaminase 1 (Clostridium perfringens (strain 13 / Type A)).